The chain runs to 291 residues: Acetyl-coenzyme A carboxylase carboxyl transferase subunit beta (291 aa).

A CoA carboxyltransferase N-terminal domain is found at 36-291 (MWVKCDGCGK…KILVIHGRGN (256 aa)). The Zn(2+) site is built by Cys-40, Cys-43, Cys-59, and Cys-62. Residues 40–62 (CDGCGKVLYKNDMEKNNKVCYHC) form a C4-type zinc finger.

The protein belongs to the AccD/PCCB family. Acetyl-CoA carboxylase is a heterohexamer composed of biotin carboxyl carrier protein (AccB), biotin carboxylase (AccC) and two subunits each of ACCase subunit alpha (AccA) and ACCase subunit beta (AccD). It depends on Zn(2+) as a cofactor.

The protein localises to the cytoplasm. The enzyme catalyses N(6)-carboxybiotinyl-L-lysyl-[protein] + acetyl-CoA = N(6)-biotinyl-L-lysyl-[protein] + malonyl-CoA. The protein operates within lipid metabolism; malonyl-CoA biosynthesis; malonyl-CoA from acetyl-CoA: step 1/1. Its function is as follows. Component of the acetyl coenzyme A carboxylase (ACC) complex. Biotin carboxylase (BC) catalyzes the carboxylation of biotin on its carrier protein (BCCP) and then the CO(2) group is transferred by the transcarboxylase to acetyl-CoA to form malonyl-CoA. This chain is Acetyl-coenzyme A carboxylase carboxyl transferase subunit beta, found in Clostridium kluyveri (strain NBRC 12016).